A 278-amino-acid polypeptide reads, in one-letter code: 4-hydroxy-tetrahydrodipicolinate reductase (278 aa).

NAD(+) is bound by residues 13 to 18 (GAAGKM) and 111 to 113 (GTT). Residue H167 is the Proton donor/acceptor of the active site. H168 is a binding site for (S)-2,3,4,5-tetrahydrodipicolinate. K171 (proton donor) is an active-site residue. A (S)-2,3,4,5-tetrahydrodipicolinate-binding site is contributed by 177-178 (GT).

This sequence belongs to the DapB family.

The protein localises to the cytoplasm. The enzyme catalyses (S)-2,3,4,5-tetrahydrodipicolinate + NAD(+) + H2O = (2S,4S)-4-hydroxy-2,3,4,5-tetrahydrodipicolinate + NADH + H(+). It catalyses the reaction (S)-2,3,4,5-tetrahydrodipicolinate + NADP(+) + H2O = (2S,4S)-4-hydroxy-2,3,4,5-tetrahydrodipicolinate + NADPH + H(+). It participates in amino-acid biosynthesis; L-lysine biosynthesis via DAP pathway; (S)-tetrahydrodipicolinate from L-aspartate: step 4/4. Functionally, catalyzes the conversion of 4-hydroxy-tetrahydrodipicolinate (HTPA) to tetrahydrodipicolinate. The chain is 4-hydroxy-tetrahydrodipicolinate reductase from Mastigocladus laminosus (Fischerella sp.).